A 578-amino-acid polypeptide reads, in one-letter code: Putative multidrug export ATP-binding/permease protein SA1683 (578 aa).

The Cytoplasmic portion of the chain corresponds to 1-15; the sequence is MIKRYLQFVKPYKYR. Residues 16 to 36 form a helical membrane-spanning segment; sequence IFATIIVGIIKFGIPMLIPLL. An ABC transmembrane type-1 domain is found at 16–306; it reads IFATIIVGII…LVASFTTLTQ (291 aa). Residues 37–59 lie on the Extracellular side of the membrane; that stretch reads IKYAIDGVINNHALTTDEKVHHL. The chain crosses the membrane as a helical span at residues 60–80; it reads TIAIGIALFIFVIVRPPIEFI. Topologically, residues 81-138 are cytoplasmic; it reads RQYLAQWTSNKILYDIRKKLYNHLQALSARFYANNQVGQVISRVINDVEQTKDFILTG. Residues 139 to 159 traverse the membrane as a helical segment; it reads LMNIWLDCITIIIALSIMFFL. Topologically, residues 160 to 162 are extracellular; it reads DVK. Residues 163–183 traverse the membrane as a helical segment; that stretch reads LTLAALFIFPFYILTVYVFFG. Topologically, residues 184 to 244 are cytoplasmic; it reads RLRKLTRERS…TRALKHTRWN (61 aa). Residues 245-263 traverse the membrane as a helical segment; that stretch reads AYSFAAINTVTDIGPIIVI. At 264 to 269 the chain is on the extracellular side; sequence GVGAYL. Residues 270-287 traverse the membrane as a helical segment; that stretch reads AISGSITVGTLAAFVGYL. Topologically, residues 288 to 578 are cytoplasmic; sequence ELLFGPLRRL…YEHLYSIQNL (291 aa). The region spanning 340 to 575 is the ABC transporter domain; the sequence is IDIDHVSFQY…QGAYEHLYSI (236 aa). Residue 374-381 coordinates ATP; it reads GMSGGGKS.

This sequence belongs to the ABC transporter superfamily. As to quaternary structure, homodimer.

Its subcellular location is the cell membrane. Its function is as follows. May be involved in multidrug export. Transmembrane domains (TMD) form a pore in the cell membrane and the ATP-binding domain (NBD) is responsible for energy generation. This Staphylococcus aureus (strain N315) protein is Putative multidrug export ATP-binding/permease protein SA1683.